The chain runs to 363 residues: Fructose-bisphosphate aldolase A (363 aa).

Arg43 contacts beta-D-fructose 1,6-bisphosphate. Residue Glu188 is the Proton acceptor of the active site. Lys230 acts as the Schiff-base intermediate with dihydroxyacetone-P in catalysis. Beta-D-fructose 1,6-bisphosphate contacts are provided by residues 272-274 (SGG), Ser301, and Arg304.

Belongs to the class I fructose-bisphosphate aldolase family. As to quaternary structure, tetramer.

It catalyses the reaction beta-D-fructose 1,6-bisphosphate = D-glyceraldehyde 3-phosphate + dihydroxyacetone phosphate. Its pathway is carbohydrate degradation; glycolysis; D-glyceraldehyde 3-phosphate and glycerone phosphate from D-glucose: step 4/4. Functionally, plays a key role in glycolysis and gluconeogenesis. This Salmo salar (Atlantic salmon) protein is Fructose-bisphosphate aldolase A.